Reading from the N-terminus, the 233-residue chain is DNA-directed RNA polymerase I subunit RPA34 (233 aa).

Phosphoserine occurs at positions 10, 12, 14, and 60. The segment covering 179-191 has biased composition (basic and acidic residues); the sequence is DFHVAEEVKENKK. The interval 179–233 is disordered; that stretch reads DFHVAEEVKENKKEPKKRSHHDDEEESSEKKKKKKEKREKREKKDKKDKKKKHRD. Basic residues predominate over residues 208–233; sequence KKKKKKEKREKREKKDKKDKKKKHRD.

It belongs to the eukaryotic RPA34 RNA polymerase subunit family. In terms of assembly, component of the RNA polymerase I (Pol I) complex consisting of 14 subunits: RPA135, RPA190, RPC40, RPA14, RPB5, RPO26, RPA43, RPB8, RPA12, RPB10, RPC19, RPC10, RPA49 and RPA34. The complex is composed of a horseshoe-shaped core containing ten subunits (RPA135, RPA190, RPB5, RPO26, RPB8, RPB10, RPC10, RPA12, RPC19 and RPC40) where RPA135 and RPA190 form the DNA-binding cleft. Outside of the core, RPA14 and RPA43 form the stalk that mediates interactions with transcription initiation factors and newly synthesized RNA. Forms a TFIIF-like heterodimer with RPA49; the heterodimer formed by RPA34 and RPA49 can be dissociated from the Pol I core giving rise to a 12 subunit form A* of Pol I (formerly called pol A) that shows impaired transcript elongation activity and increased sensitivity to alpha-amanitin. The heterodimer formed by RPA34 and RPA49 stabilizes subunit RPA12 and stimulates RPA12-dependent RNA cleavage.

Its subcellular location is the nucleus. The protein localises to the nucleolus. Functionally, DNA-dependent RNA polymerases catalyze the transcription of DNA into RNA using the four ribonucleoside triphosphates as substrates. Component of RNA polymerase I (Pol I) which synthesizes ribosomal RNA precursors. Besides, RNA polymerase I has intrinsic RNA cleavage activity. The heterodimer formed by RPA34 and RPA49 stimulates transcript elongation by Pol I. This chain is DNA-directed RNA polymerase I subunit RPA34 (RPA34), found in Saccharomyces cerevisiae (strain ATCC 204508 / S288c) (Baker's yeast).